A 572-amino-acid chain; its full sequence is Sulfate adenylyltransferase (572 aa).

Positions 1 to 169 (MANAPHGGVL…IEAVNKLNHY (169 aa)) are N-terminal. The segment at 170-393 (DYVALRYTPA…LRESNPPRAT (224 aa)) is catalytic. Glutamine 197 is a binding site for sulfate. ATP contacts are provided by residues 197 to 200 (QTRN) and 291 to 294 (GRDH). Residues threonine 198, arginine 199, and asparagine 200 contribute to the active site. Arginine 199 serves as a coordination point for sulfate. Residue alanine 295 participates in sulfate binding. Valine 333 lines the ATP pocket. The segment at 394–572 (QGFTIFLTGY…LESQGFLERQ (179 aa)) is allosteric regulation domain; adenylyl-sulfate kinase-like. Residues 433 to 436 (DTVR), arginine 450, 476 to 477 (IA), and arginine 514 each bind 3'-phosphoadenylyl sulfate.

This sequence in the N-terminal section; belongs to the sulfate adenylyltransferase family. The protein in the C-terminal section; belongs to the APS kinase family. Homohexamer. Dimer of trimers.

Its subcellular location is the cytoplasm. It catalyses the reaction sulfate + ATP + H(+) = adenosine 5'-phosphosulfate + diphosphate. It participates in sulfur metabolism; hydrogen sulfide biosynthesis; sulfite from sulfate: step 1/3. Its activity is regulated as follows. Allosterically inhibited by 3'-phosphoadenosine 5'-phosphosulfate (PAPS). Its function is as follows. Catalyzes the first intracellular reaction of sulfate assimilation, forming adenosine-5'-phosphosulfate (APS) from inorganic sulfate and ATP. Plays an important role in sulfate activation as a component of the biosynthesis pathway of sulfur-containing amino acids. In Penicillium chrysogenum (Penicillium notatum), this protein is Sulfate adenylyltransferase.